Here is a 370-residue protein sequence, read N- to C-terminus: MTPETLPIDQYEQQLAEKAARLRQMMLAFQAPEAQIFRSQPAHYRMRAEFRIWHDEDDLYHIMFDPQTKARIRIDHFMPGSPLINALMAEMMTAIRPEPLLRAKLFQIDYLTTQSGEAVVTLIYHRPLDDAWRECAAGLRDALRARGYHIQFIGRANKTKIYLDRDYVDERLTVAGRTLIYQQIENSFTQPNAGINVHMLEWALAATEGAQGDLLELYCGNGNFSLALARHFDRVLATEIAKLSVEAAHYNIAANHIDNVQIVRMSAEEFTQAMRKEREFTRLKEIDLQSYRCETIFVDPPRSGLDEATVSMVQAYPQILYISCNPDSLCRNLSTLSTTHTIERLALFDQFPYTHHMECGVLLVRKATAV.

Residues Q190, Y218, N223, E239, and D299 each contribute to the S-adenosyl-L-methionine site. The Nucleophile role is filled by C324. The active-site Proton acceptor is the E358.

The protein belongs to the class I-like SAM-binding methyltransferase superfamily. RNA M5U methyltransferase family. TrmA subfamily.

The enzyme catalyses uridine(54) in tRNA + S-adenosyl-L-methionine = 5-methyluridine(54) in tRNA + S-adenosyl-L-homocysteine + H(+). It carries out the reaction uridine(341) in tmRNA + S-adenosyl-L-methionine = 5-methyluridine(341) in tmRNA + S-adenosyl-L-homocysteine + H(+). Dual-specificity methyltransferase that catalyzes the formation of 5-methyluridine at position 54 (m5U54) in all tRNAs, and that of position 341 (m5U341) in tmRNA (transfer-mRNA). This is tRNA/tmRNA (uracil-C(5))-methyltransferase from Sodalis glossinidius (strain morsitans).